Here is a 98-residue protein sequence, read N- to C-terminus: Homeobox protein Ht-En (98 aa).

The segment at residues 3-62 (EKRPRTAFTGDQLARLKREFSENKYLTEQRRTCLAKELNLNESQIKIWFQNKRAKMKKAS) is a DNA-binding region (homeobox). The tract at residues 79–98 (NHSSSSSSSSSSSSSIFLLA) is disordered. Low complexity predominate over residues 81–98 (SSSSSSSSSSSSSIFLLA).

It belongs to the engrailed homeobox family. Phosphorylated in the Ser-rich domain.

Its subcellular location is the nucleus. In terms of biological role, this protein specifies the body segmentation pattern. In Helobdella triserialis (Leech), this protein is Homeobox protein Ht-En (HT-EN).